Reading from the N-terminus, the 121-residue chain is Pancreatic progenitor cell differentiation and proliferation factor (121 aa).

Disordered regions lie at residues 22–47 (GSTS…PGLQ) and 101–121 (SRQL…PPPS). Residues 23–33 (STSSNSSCGSS) are compositionally biased toward low complexity. Residues 101-110 (SRQLSESSDS) are compositionally biased toward polar residues.

It belongs to the PPDPF family.

Its function is as follows. Probable regulator of exocrine pancreas development. The protein is Pancreatic progenitor cell differentiation and proliferation factor (ppdpf) of Salmo salar (Atlantic salmon).